Consider the following 313-residue polypeptide: Secreted mono- and diacylglycerol lipase MDL5 (313 aa).

The signal sequence occupies residues 1–20 (MQLQYVLTLLWIIFAQNVFS). Cys-66 and Cys-306 form a disulfide bridge. Residues Asn-72 and Asn-111 are each glycosylated (N-linked (GlcNAc...) asparagine). The Nucleophile role is filled by Ser-180. Asp-238 is an active-site residue. A glycan (N-linked (GlcNAc...) asparagine) is linked at Asn-263. His-290 is an active-site residue.

The protein belongs to the AB hydrolase superfamily. Lipase family. Class 3 subfamily.

The protein resides in the secreted. The protein localises to the cell wall. The catalysed reaction is a monoacylglycerol + H2O = glycerol + a fatty acid + H(+). The enzyme catalyses a diacylglycerol + H2O = a monoacylglycerol + a fatty acid + H(+). In terms of biological role, secreted lipase involved in Dandruff and seborrheic dermatitis (D/SD) probably via lipase-mediated breakdown of sebaceous lipids and release of irritating free fatty acids. Shows activity against monoglyceride and diglyceride substrates, but not triglyceride substrates and does not exhibit regio-selective production of diacylglycerols. Cleaves oleic acid from 1,2 isomers of diolein on both the 1 and the 2 position of the glycerol backbone, resulting mainly in free fatty acids but no monoolein is detected. Shows activity on monoolein and liberates mostly free fatty acids, but can also perform the reverse reaction and produce diolein. This chain is Secreted mono- and diacylglycerol lipase MDL5, found in Malassezia globosa (strain ATCC MYA-4612 / CBS 7966) (Dandruff-associated fungus).